The chain runs to 212 residues: MFAEYGVLNYWTYLVGAIFIVLVPGPNTLFVLKNSVSSGMKGGYLAACGVFIGDAVLMFLAWAGVATLIKTTPILFNIVRYLGAFYLLYLGSKILYATLKGKNNEAKSDEPQYGAIFKRALILSLTNPKAILFYVSFFVQFIDVNAPHTGISFFILATTLELVSFCYLSFLIISGAFVTQYIRTKKKLAKVGNSLIGLMFVGFAARLATLQS.

The next 6 membrane-spanning stretches (helical) occupy residues 12–32 (TYLV…LFVL), 49–69 (GVFI…ATLI), 71–91 (TTPI…LYLG), 122–142 (ILSL…VQFI), 153–173 (FFIL…FLII), and 188–208 (LAKV…ARLA).

This sequence belongs to the Rht family.

The protein resides in the cell inner membrane. It catalyses the reaction L-leucine(in) + H(+)(out) = L-leucine(out) + H(+)(in). Its function is as follows. Exporter of leucine. In Shigella sonnei (strain Ss046), this protein is Leucine efflux protein (leuE).